The sequence spans 184 residues: Ribosome-recycling factor (184 aa).

Belongs to the RRF family.

It localises to the cytoplasm. Its function is as follows. Responsible for the release of ribosomes from messenger RNA at the termination of protein biosynthesis. May increase the efficiency of translation by recycling ribosomes from one round of translation to another. This chain is Ribosome-recycling factor, found in Bifidobacterium adolescentis (strain ATCC 15703 / DSM 20083 / NCTC 11814 / E194a).